Reading from the N-terminus, the 749-residue chain is Metabotropic glutamate receptor-like protein M (749 aa).

The signal sequence occupies residues M1–S22. The Extracellular portion of the chain corresponds to F23 to K385. 5 N-linked (GlcNAc...) asparagine glycosylation sites follow: N67, N164, N257, N271, and N345. Residues G386–V406 form a helical membrane-spanning segment. Over Y407–P419 the chain is Cytoplasmic. The chain crosses the membrane as a helical span at residues I420–V440. Over G441–T456 the chain is Extracellular. The chain crosses the membrane as a helical span at residues L457–F477. Over D478–L492 the chain is Cytoplasmic. A helical transmembrane segment spans residues F493 to V513. Topologically, residues G514 to S544 are extracellular. The helical transmembrane segment at T545–W565 threads the bilayer. The Cytoplasmic portion of the chain corresponds to K566–K579. Residues A580–I600 form a helical membrane-spanning segment. At S601–T609 the chain is on the extracellular side. Residues I610–P630 traverse the membrane as a helical segment. The Cytoplasmic portion of the chain corresponds to K631 to E749. The interval A658–E749 is disordered. The span at S698–V716 shows a compositional bias: polar residues. Residues F725–E740 show a composition bias toward acidic residues.

The protein in the N-terminal section; belongs to the BMP lipoprotein family. In the C-terminal section; belongs to the G-protein coupled receptor 3 family. GABA-B receptor subfamily.

The protein resides in the membrane. In Dictyostelium discoideum (Social amoeba), this protein is Metabotropic glutamate receptor-like protein M (grlM).